Here is a 102-residue protein sequence, read N- to C-terminus: Phosphoribosyl-ATP pyrophosphatase (102 aa).

It belongs to the PRA-PH family.

It localises to the cytoplasm. The catalysed reaction is 1-(5-phospho-beta-D-ribosyl)-ATP + H2O = 1-(5-phospho-beta-D-ribosyl)-5'-AMP + diphosphate + H(+). The protein operates within amino-acid biosynthesis; L-histidine biosynthesis; L-histidine from 5-phospho-alpha-D-ribose 1-diphosphate: step 2/9. The protein is Phosphoribosyl-ATP pyrophosphatase of Ignicoccus hospitalis (strain KIN4/I / DSM 18386 / JCM 14125).